Reading from the N-terminus, the 361-residue chain is 3-dehydroquinate synthase (361 aa).

It belongs to the archaeal-type DHQ synthase family.

It catalyses the reaction 2-amino-2,3,7-trideoxy-D-lyxo-hept-6-ulosonate + NAD(+) + H2O = 3-dehydroquinate + NH4(+) + NADH + H(+). Functionally, catalyzes the oxidative deamination and cyclization of 2-amino-3,7-dideoxy-D-threo-hept-6-ulosonic acid (ADH) to yield 3-dehydroquinate (DHQ), which is fed into the canonical shikimic pathway of aromatic amino acid biosynthesis. In Methanococcus maripaludis (strain C5 / ATCC BAA-1333), this protein is 3-dehydroquinate synthase.